The following is a 561-amino-acid chain: AT-rich interactive domain-containing protein 3B (561 aa).

The residue at position 1 (Met1) is an N-acetylmethionine. Low complexity predominate over residues 1–17 (MEPLQQQQQQQQQQQKQ). 3 disordered regions span residues 1–36 (MEPL…QQMR), 53–122 (LSAT…SKYF), and 136–179 (PMSN…WNLD). Position 89 is a phosphoserine (Ser89). Residues 90 to 109 (EPEEEDGGLEDEDGDDEVAE) are compositionally biased toward acidic residues. Over residues 152–162 (QAKEDHTKDAS) the composition is skewed to basic and acidic residues. A compositionally biased stretch (polar residues) spans 164–178 (ASPSVSTAGQPNWNL). Ser165 is modified (phosphoserine). The interval 203-365 (SRDFAKLYEL…SPPKIRFPIL (163 aa)) is interaction with RB1. An ARID domain is found at 215–307 (DPERKEFLDD…YLYAYECEKK (93 aa)). A Phosphoserine modification is found at Ser311. Asymmetric dimethylarginine is present on Arg361. The interval 370 to 397 (SSGTNTSSPRISPATTLRKGDGAPVTTV) is disordered. The REKLES domain maps to 419–517 (AALEQLRERL…GVLFAQKPVV (99 aa)). The segment at 490-513 (SSIGSINMSVDIDGTTYAGVLFAQ) is interaction with ARID3A. Residues 523-552 (SAPQSLGSSASSSSSSHCSPSPTSSRGTPS) show a composition bias toward low complexity. The disordered stretch occupies residues 523–561 (SAPQSLGSSASSSSSSHCSPSPTSSRGTPSAEPSTSWSL).

In terms of assembly, heterodimer with ARID3A. Interacts with unphosphorylated RB1. As to expression, expressed in placenta, testis and leukocytes. Expressed in neuroblastoma. Present in K-562 erythrocytic leukemia cell line (at protein level).

The protein localises to the nucleus. Its function is as follows. Transcription factor which may be involved in neuroblastoma growth and malignant transformation. Favors nuclear targeting of ARID3A. This is AT-rich interactive domain-containing protein 3B (ARID3B) from Homo sapiens (Human).